Reading from the N-terminus, the 460-residue chain is UDP-N-acetylmuramate--L-alanine ligase (460 aa).

118–124 provides a ligand contact to ATP; the sequence is GTHGKTT.

It belongs to the MurCDEF family.

It is found in the cytoplasm. The enzyme catalyses UDP-N-acetyl-alpha-D-muramate + L-alanine + ATP = UDP-N-acetyl-alpha-D-muramoyl-L-alanine + ADP + phosphate + H(+). It participates in cell wall biogenesis; peptidoglycan biosynthesis. In terms of biological role, cell wall formation. This is UDP-N-acetylmuramate--L-alanine ligase from Gloeobacter violaceus (strain ATCC 29082 / PCC 7421).